The sequence spans 505 residues: ATP synthase subunit alpha (505 aa).

171–178 (GDRQTGKT) is an ATP binding site.

Belongs to the ATPase alpha/beta chains family. F-type ATPases have 2 components, CF(1) - the catalytic core - and CF(0) - the membrane proton channel. CF(1) has five subunits: alpha(3), beta(3), gamma(1), delta(1), epsilon(1). CF(0) has three main subunits: a(1), b(2) and c(9-12). The alpha and beta chains form an alternating ring which encloses part of the gamma chain. CF(1) is attached to CF(0) by a central stalk formed by the gamma and epsilon chains, while a peripheral stalk is formed by the delta and b chains.

The protein localises to the cell inner membrane. The enzyme catalyses ATP + H2O + 4 H(+)(in) = ADP + phosphate + 5 H(+)(out). Functionally, produces ATP from ADP in the presence of a proton gradient across the membrane. The alpha chain is a regulatory subunit. This Nitratiruptor sp. (strain SB155-2) protein is ATP synthase subunit alpha.